Here is a 300-residue protein sequence, read N- to C-terminus: Ribosomal RNA small subunit methyltransferase A (300 aa).

S-adenosyl-L-methionine contacts are provided by Asn36, Val38, Gly63, Glu84, Asp113, and Asn131.

The protein belongs to the class I-like SAM-binding methyltransferase superfamily. rRNA adenine N(6)-methyltransferase family. RsmA subfamily.

It is found in the cytoplasm. The enzyme catalyses adenosine(1518)/adenosine(1519) in 16S rRNA + 4 S-adenosyl-L-methionine = N(6)-dimethyladenosine(1518)/N(6)-dimethyladenosine(1519) in 16S rRNA + 4 S-adenosyl-L-homocysteine + 4 H(+). Its function is as follows. Specifically dimethylates two adjacent adenosines (A1518 and A1519) in the loop of a conserved hairpin near the 3'-end of 16S rRNA in the 30S particle. May play a critical role in biogenesis of 30S subunits. The sequence is that of Ribosomal RNA small subunit methyltransferase A from Kineococcus radiotolerans (strain ATCC BAA-149 / DSM 14245 / SRS30216).